A 116-amino-acid polypeptide reads, in one-letter code: Venom nerve growth factor (116 aa).

3 disulfides stabilise this stretch: cysteine 14–cysteine 78, cysteine 56–cysteine 106, and cysteine 66–cysteine 108. Residue lysine 86 coordinates a 1,2-diacyl-sn-glycerol.

It belongs to the NGF-beta family. As to quaternary structure, homodimer; non-covalently linked. Interacts with NTRK1. Post-translationally, not glycosylated. As to expression, expressed by the venom gland.

The protein resides in the secreted. Its function is as follows. Nerve growth factor is important for the development and maintenance of the sympathetic and sensory nervous systems. It stimulates division and differentiation of sympathetic and embryonic sensory neurons as well as basal forebrain cholinergic neurons in the brain. Its relevance in the snake venom is not clear. However, it has been shown to inhibit metalloproteinase-dependent proteolysis of platelet glycoprotein Ib alpha, suggesting a metalloproteinase inhibition to prevent metalloprotease autodigestion and/or protection against prey proteases. Binds a lipid between the two protein chains in the homodimer. The lipid-bound form promotes histamine relase from mouse mast cells, contrary to the lipid-free form. The polypeptide is Venom nerve growth factor (Naja atra (Chinese cobra)).